We begin with the raw amino-acid sequence, 270 residues long: Undecaprenyl-diphosphatase 2 (270 aa).

The next 8 membrane-spanning stretches (helical) occupy residues 1–21 (MDLI…FLPV), 39–59 (QGLA…VWYF), 87–107 (WAVI…KGFI), 114–134 (PLVI…SDVV), 147–167 (LSWK…IPGT), 190–210 (FSFL…TLDL), 221–241 (AMGL…HFFL), and 247–267 (VGML…LVLF).

Belongs to the UppP family.

It localises to the cell inner membrane. It carries out the reaction di-trans,octa-cis-undecaprenyl diphosphate + H2O = di-trans,octa-cis-undecaprenyl phosphate + phosphate + H(+). Its function is as follows. Catalyzes the dephosphorylation of undecaprenyl diphosphate (UPP). Confers resistance to bacitracin. The chain is Undecaprenyl-diphosphatase 2 from Stutzerimonas stutzeri (strain A1501) (Pseudomonas stutzeri).